Reading from the N-terminus, the 200-residue chain is MSKYAGIVLAGGMSSRFGEPKALASWQGGTFIEHILKVMTSTLQEVVVISHSDIKERVEKLVQVPVIEDIPHYKGNGPLAGIVSGMEYIEADWYAIMPCDAPNVSHEWFTILLGQTSNEYDAVVPIINGRKQPLLAAYHNRVKEKIYALLQEEKRSMVQLLSQCNVKYIAGEDVQANADWFINVNTKEEYVQAQKDLSNE.

GTP is bound by residues Leu9–Gly11, Lys21, Asp69, and Asp100. Asp100 contacts Mg(2+).

This sequence belongs to the MobA family. It depends on Mg(2+) as a cofactor.

The protein resides in the cytoplasm. It catalyses the reaction Mo-molybdopterin + GTP + H(+) = Mo-molybdopterin guanine dinucleotide + diphosphate. Its function is as follows. Transfers a GMP moiety from GTP to Mo-molybdopterin (Mo-MPT) cofactor (Moco or molybdenum cofactor) to form Mo-molybdopterin guanine dinucleotide (Mo-MGD) cofactor. The polypeptide is Probable molybdenum cofactor guanylyltransferase (Bacillus thuringiensis (strain Al Hakam)).